The chain runs to 397 residues: MSTYIPIHDRPPHYANLPSPPSNSRQPRPPRYSSPDIDPDIPLARMSSAHESDPSEQANATQSGDYVPRQRVGSQGAEQEGQSRKRARTSPSHSGGNGSYVPRQRTEESHHSHHNGHSGHAQSDQHGNGQVYRPRHGQAPLTGSIFNLSPRNPFTSVVGDFIMNAAMGHSNVEIELKLGTFMTPSMPGQQPRRINMPTLSEMIIPHDYPNGPFVSTINHLHHRTLNELLNRAVESQSTHPTGRLYFSRSKLADSFYDHSEHGHGKVRVSRDMDNGHVVQAVEKRRIADLNVYCPGMAYDFRISVNTETPCEVPTGNAKSVRYKDRACYRHQVCRVDLTSVFSSNPRNADVPPSRSFELEIEVLDVPALLAEGAAQSERFDEILQNVLDSARMLVKNI.

Residues 1 to 149 (MSTYIPIHDR…PLTGSIFNLS (149 aa)) are disordered. Residues 55-64 (SEQANATQSG) are compositionally biased toward polar residues.

Belongs to the fungal TPase family. In terms of assembly, heterodimer. The mRNA-capping enzyme is composed of two separate chains alpha and beta, respectively a mRNA guanylyltransferase and an mRNA 5'-triphosphate monophosphatase. Mg(2+) is required as a cofactor.

The protein resides in the nucleus. The catalysed reaction is a 5'-end triphospho-ribonucleoside in mRNA + H2O = a 5'-end diphospho-ribonucleoside in mRNA + phosphate + H(+). First step of mRNA capping. Converts the 5'-triphosphate end of a nascent mRNA chain into a diphosphate end. The sequence is that of mRNA-capping enzyme subunit beta (CET1) from Cryptococcus neoformans var. neoformans serotype D (strain JEC21 / ATCC MYA-565) (Filobasidiella neoformans).